Reading from the N-terminus, the 1562-residue chain is MIIFRKSFFTFWLLLNSVLALVITQNRVDRGTLDLSVGDITINSGASWSIINNAISTLVGSLTVQPNAGLYITSTSPLLSLQVTLTSLLSTIQNNGIIAFNSSPSLTSSTYNLVGLSLVNTGEMYFSASGVLPSVMALTAASWSNSGLMAFYQNQRSSGVVSLGTPLGSITNNGQICLNNEVYQQTTSINGSGCFTANRDSTIYIANVLLPVSTSQNFYLADSQSSIIVQAILTPQVFNVYGFGNGNMVGVTLPLLGNILNPAYSYNPSTGILRLRNLLVYQDFNIGPGYNPSLFSIVTDNGAGLPSTILGSVSYSGPVPPRALPASCKIACKPVPTAPGTNPTEYTTTITTTNSAGKPLTETGVVDISTDSNGSWFSSTTIFPTSSSSSSSSSTVSSTAPSSSSTKPSSSSQPSSTPPPSSSSKASSTTPSSSSQSSSTTPSSSSKPSSTVPPTGSSQSSSTIPSSSTQPSSTAPSSLSSPSSSTTPSSSSQSSFSAQSSIGQTSSSTVSSSSSQPSSSQPSSSQSSSATTSSSSQFSSSAPPSSTQSSFTAESSNSQLSSTTPSSSTEASSTVPSSSSQLSSSVPLTNSVSLSSVSSSDNGSSSASSPSSSQSSIASTAESSSTFPSSSDQQSSSIQSPSSQESSVSSTPTSSLQSSTNTISSSQDSSSFSPTTSDNSSTNSASSLSTLSSSDTSVSNPSTSNVSSTDNTQSSVASATPTDSAISATSSDITTEFTTTWEVTNSDGSVSTESGIVSESGTSFTTITTFPPPTTSSDITTEFTTTWEVTNSDGSVSTESGIVSESGTSFTTITTFPPPTTSSDITTEFTTTWEVTNSDGSVSTESGIVSESGTSFTTITTFPPPTTSSDITTEFTTTWEVTNSDGSVSTESGIVSESGTSFTTITTFPPPTSSSVAADVTTEFTTTWEVTNSDGSVSTESGIVSESGTSFTTITTFELPVVCKRDDISCGPATSATNSDTAAQDPTSDATAIESEFTTTWTTTNSDGSVETNSGVVSQSGSSLTTITTFAPDATSEYTTSWTTTNSDGSVATNSGVVSQSGTSFTTITTFEPPVVCKRDDISCGPATSAMNSDTAAQQLTSGMTATETEFASTWVVTKSDGSVFTESGIVGQSGTSFTTLTTFAPTTSSGAVQTEYTSTWEVTNTDGSVSTKSGIIDQSGTYFTTLSTFAPTTISGAIETEFTSTWVATDTDGLVSTKSGIVSQSGTSIATLTIFPEPAGTVYPVTTLFTTEYVTTCPNGELSTATGVVVVSTDSKGIEQTVTSVVPSTVYTKETVTSIITHCIKNKCFESTTTLVSSVPCPTQVPGVFTSTDNGHGVPIASIDVTTGAATVSNTIKAQDSTGFTSAGNAITTAITATGAVTTSVGGQGSTDYSNAGNTIAAGSGSDSGSGSGSGSGSGSSSNTVGIVNPKVSSAASGITVAAASASAGQSWPYSSGGSGNGVLPSGANNVGSNQTPTVSGGNSNPSTVTGAAVGAGGVVSGSPSYSGNSLLISFVSSQSGAISSSTGVTIPIATENSGSKFSVGKSAFIAIILTTFIGFI.

The signal sequence occupies residues 1–20 (MIIFRKSFFTFWLLLNSVLA). An N-linked (GlcNAc...) asparagine glycan is attached at asparagine 190. The span at 338–353 (APGTNPTEYTTTITTT) shows a compositional bias: low complexity. Residues 338-366 (APGTNPTEYTTTITTTNSAGKPLTETGVV) form a disordered region. Asparagine 373 is a glycosylation site (N-linked (GlcNAc...) asparagine). Low complexity-rich tracts occupy residues 383–415 (FPTSSSSSSSSSTVSSTAPSSSSTKPSSSSQPS) and 422–729 (SSSK…ISAT). Disordered regions lie at residues 383–729 (FPTS…ISAT), 1404–1424 (GSGSDSGSGSGSGSGSGSSSN), and 1455–1486 (YSSGGSGNGVLPSGANNVGSNQTPTVSGGNSN). Residues asparagine 602, asparagine 679, and asparagine 705 are each glycosylated (N-linked (GlcNAc...) asparagine). Gly residues predominate over residues 1407-1419 (SDSGSGSGSGSGS). The segment covering 1468-1486 (GANNVGSNQTPTVSGGNSN) has biased composition (polar residues). A lipid anchor (GPI-anchor amidated asparagine) is attached at asparagine 1538. A propeptide spans 1539 to 1562 (SGSKFSVGKSAFIAIILTTFIGFI) (removed in mature form).

Belongs to the HYR1/IFF family. The GPI-anchor is attached to the protein in the endoplasmic reticulum and serves to target the protein to the cell surface. There, the glucosamine-inositol phospholipid moiety is cleaved off and the GPI-modified mannoprotein is covalently attached via its lipidless GPI glycan remnant to the 1,6-beta-glucan of the outer cell wall layer.

It is found in the secreted. The protein resides in the cell wall. It localises to the membrane. Its function is as follows. GPI-anchored cell wall protein involved in cell wall organization, hyphal growth, as well as in host-fungal interaction and virulence. The chain is Cell wall protein RBR3 (RBR3) from Candida albicans (strain SC5314 / ATCC MYA-2876) (Yeast).